A 429-amino-acid chain; its full sequence is Ribosomal RNA small subunit methyltransferase B (429 aa).

Residues 254 to 260 (CAAPGGK), D277, D303, and D322 contribute to the S-adenosyl-L-methionine site. C375 acts as the Nucleophile in catalysis.

Belongs to the class I-like SAM-binding methyltransferase superfamily. RsmB/NOP family.

It localises to the cytoplasm. The catalysed reaction is cytidine(967) in 16S rRNA + S-adenosyl-L-methionine = 5-methylcytidine(967) in 16S rRNA + S-adenosyl-L-homocysteine + H(+). Its function is as follows. Specifically methylates the cytosine at position 967 (m5C967) of 16S rRNA. The polypeptide is Ribosomal RNA small subunit methyltransferase B (Yersinia enterocolitica serotype O:8 / biotype 1B (strain NCTC 13174 / 8081)).